The primary structure comprises 210 residues: MARYIGPVCRQCRREGMKLYLKGERCHSEKCAIEKRNFIPGQHGKDRAKKIVGYGLQLREKQKVRRVYGVLERQFRNAFEKAALQKGITGENLMQNLERRLDSVIYRMGFGTSRAQARQVVRHGHINVNGRKCNIPSALINVGDEITVRETSKNNATILSARDATAHAPAPNWIEVDREGLKGRVQSLPKREDLVQIQLNEQLIVELYSK.

In terms of domain architecture, S4 RNA-binding spans 99-161; the sequence is RRLDSVIYRM…SKNNATILSA (63 aa).

It belongs to the universal ribosomal protein uS4 family. In terms of assembly, part of the 30S ribosomal subunit. Contacts protein S5. The interaction surface between S4 and S5 is involved in control of translational fidelity.

Its function is as follows. One of the primary rRNA binding proteins, it binds directly to 16S rRNA where it nucleates assembly of the body of the 30S subunit. In terms of biological role, with S5 and S12 plays an important role in translational accuracy. This is Small ribosomal subunit protein uS4 from Solibacter usitatus (strain Ellin6076).